A 135-amino-acid chain; its full sequence is Large ribosomal subunit protein uL15 (135 aa).

The disordered stretch occupies residues 21-66 (VGRGQGSGMGKTATRGGKGQTARTGYKAKRGFEGGQQPLQRRLPKI).

Belongs to the universal ribosomal protein uL15 family. Part of the 50S ribosomal subunit.

In terms of biological role, binds to the 23S rRNA. The protein is Large ribosomal subunit protein uL15 of Helicobacter pylori (strain HPAG1).